Reading from the N-terminus, the 456-residue chain is Hydroxymethylglutaryl coenzyme A synthase (456 aa).

Residue Ala-34 participates in (3S)-3-hydroxy-3-methylglutaryl-CoA binding. Catalysis depends on Glu-85, which acts as the Proton donor/acceptor. 7 residues coordinate (3S)-3-hydroxy-3-methylglutaryl-CoA: Cys-119, Thr-161, Ser-211, His-258, Lys-267, Asn-335, and Ser-369. Cys-119 serves as the catalytic Acyl-thioester intermediate. The active-site Proton donor/acceptor is the His-258.

Belongs to the thiolase-like superfamily. HMG-CoA synthase family.

The catalysed reaction is acetoacetyl-CoA + acetyl-CoA + H2O = (3S)-3-hydroxy-3-methylglutaryl-CoA + CoA + H(+). HMG-CoA synthase; part of the gene cluster that mediates the biosynthesis of 1233A, a natural compound known as an inhibitor of HMG-CoA synthase in the mevalonate pathway and with antibacterial and antifungal activities. This enzyme condenses acetyl-CoA with acetoacetyl-CoA to form HMG-CoA, which is the substrate for HMG-CoA reductase. As part of the 1233A biosynthesis cluster, is involved in conferring self-resistance to 1233A. This Fusarium sp protein is Hydroxymethylglutaryl coenzyme A synthase.